The chain runs to 186 residues: MISSNDFRTGTSIEIDGAVWRVVEFLHVKPGKGSAFVRTKLKSVKNGSVVEKTFRAGEMLPQALLEKSSLQHTYMEGDDYVFMDMSSYEETRLTAAQIGDSRKYLKEGMEVNVVSWNDTPLEVELPNSVVLEIKETDPGVKGDTATGGTKPAILETGAQVMVPLFLSIGEKIKVDTRNDSYLGREN.

The protein belongs to the elongation factor P family.

The protein resides in the cytoplasm. Its pathway is protein biosynthesis; polypeptide chain elongation. Its function is as follows. Involved in peptide bond synthesis. Stimulates efficient translation and peptide-bond synthesis on native or reconstituted 70S ribosomes in vitro. Probably functions indirectly by altering the affinity of the ribosome for aminoacyl-tRNA, thus increasing their reactivity as acceptors for peptidyl transferase. The sequence is that of Elongation factor P from Synechococcus sp. (strain CC9902).